We begin with the raw amino-acid sequence, 122 residues long: Acidic phospholipase A2 A' (122 aa).

Cystine bridges form between cysteine 26-cysteine 115, cysteine 28-cysteine 44, cysteine 43-cysteine 95, cysteine 49-cysteine 122, cysteine 50-cysteine 88, cysteine 57-cysteine 81, and cysteine 75-cysteine 86. Ca(2+)-binding residues include tyrosine 27, glycine 29, and glycine 31. Residue histidine 47 is part of the active site. Aspartate 48 serves as a coordination point for Ca(2+). Residue aspartate 89 is part of the active site.

This sequence belongs to the phospholipase A2 family. Group II subfamily. D49 sub-subfamily. Requires Ca(2+) as cofactor. Expressed by the venom gland.

It is found in the secreted. It carries out the reaction a 1,2-diacyl-sn-glycero-3-phosphocholine + H2O = a 1-acyl-sn-glycero-3-phosphocholine + a fatty acid + H(+). In terms of biological role, PLA2 catalyzes the calcium-dependent hydrolysis of the 2-acyl groups in 3-sn-phosphoglycerides. This Gloydius halys (Chinese water mocassin) protein is Acidic phospholipase A2 A'.